The primary structure comprises 330 residues: Spondin-2 (330 aa).

An N-terminal signal peptide occupies residues 1 to 25 (MENVSFSLDRTLWVFLLAMLGSTAG). The 191-residue stretch at 30–220 (GESVCTARPL…EITASSPSHP (191 aa)) folds into the Spondin domain. Residues Cys34 and Cys170 are joined by a disulfide bond. Glu140 serves as a coordination point for a divalent metal cation. The Ca(2+) site is built by Asp159, Asp187, and Asp191. One can recognise a TSP type-1 domain in the interval 276 to 330 (DCEVSLWSSWGLCGGPCGKLGAKSRTRYVRVQPANNGTPCPELEEEAECAPDNCV). Residue Trp282 is glycosylated (C-linked (Man) tryptophan).

As to quaternary structure, monomer. Interacts with integrin. As to expression, abundantly expressed in the developing hippocampus.

Its subcellular location is the secreted. It localises to the extracellular space. The protein localises to the extracellular matrix. Its function is as follows. Cell adhesion protein that promotes adhesion and outgrowth of hippocampal embryonic neurons. Binds directly to bacteria and their components and functions as an opsonin for macrophage phagocytosis of bacteria. Essential in the initiation of the innate immune response and represents a unique pattern-recognition molecule in the ECM for microbial pathogens. The protein is Spondin-2 (Spon2) of Rattus norvegicus (Rat).